The following is a 341-amino-acid chain: S-adenosylmethionine:tRNA ribosyltransferase-isomerase (341 aa).

Belongs to the QueA family. In terms of assembly, monomer.

Its subcellular location is the cytoplasm. The catalysed reaction is 7-aminomethyl-7-carbaguanosine(34) in tRNA + S-adenosyl-L-methionine = epoxyqueuosine(34) in tRNA + adenine + L-methionine + 2 H(+). It participates in tRNA modification; tRNA-queuosine biosynthesis. Functionally, transfers and isomerizes the ribose moiety from AdoMet to the 7-aminomethyl group of 7-deazaguanine (preQ1-tRNA) to give epoxyqueuosine (oQ-tRNA). The sequence is that of S-adenosylmethionine:tRNA ribosyltransferase-isomerase from Clostridium botulinum (strain Loch Maree / Type A3).